Reading from the N-terminus, the 479-residue chain is Ribosomal RNA small subunit methyltransferase F (479 aa).

S-adenosyl-L-methionine-binding positions include 125–131 (AAAPGSK), Glu-149, Asp-176, and Asp-194. Cys-247 functions as the Nucleophile in the catalytic mechanism.

Belongs to the class I-like SAM-binding methyltransferase superfamily. RsmB/NOP family.

It is found in the cytoplasm. The enzyme catalyses cytidine(1407) in 16S rRNA + S-adenosyl-L-methionine = 5-methylcytidine(1407) in 16S rRNA + S-adenosyl-L-homocysteine + H(+). Functionally, specifically methylates the cytosine at position 1407 (m5C1407) of 16S rRNA. This is Ribosomal RNA small subunit methyltransferase F from Escherichia coli O81 (strain ED1a).